We begin with the raw amino-acid sequence, 91 residues long: Small ribosomal subunit protein bS16 (91 aa).

This sequence belongs to the bacterial ribosomal protein bS16 family.

The sequence is that of Small ribosomal subunit protein bS16 from Latilactobacillus sakei subsp. sakei (strain 23K) (Lactobacillus sakei subsp. sakei).